The chain runs to 450 residues: Chromosomal replication initiator protein DnaA (450 aa).

Residues 1–77 form a domain I, interacts with DnaA modulators region; that stretch reads MTENEQIFWN…EVYNAQIAVD (77 aa). A domain II region spans residues 77–109; sequence DYVYEDDLMIEQQHQGQQGYTEQAFQQLPAVQS. The segment at 110–328 is domain III, AAA+ region; sequence DLNPKYSFDN…GALKDISLVA (219 aa). Positions 154, 156, 157, and 158 each coordinate ATP. Residues 329-450 form a domain IV, binds dsDNA region; the sequence is NFKQIDTITV…EIETIKNKIK (122 aa).

It belongs to the DnaA family. Oligomerizes as a right-handed, spiral filament on DNA at oriC.

It localises to the cytoplasm. Plays an essential role in the initiation and regulation of chromosomal replication. ATP-DnaA binds to the origin of replication (oriC) to initiate formation of the DNA replication initiation complex once per cell cycle. Binds the DnaA box (a 9 base pair repeat at the origin) and separates the double-stranded (ds)DNA. Forms a right-handed helical filament on oriC DNA; dsDNA binds to the exterior of the filament while single-stranded (ss)DNA is stabiized in the filament's interior. The ATP-DnaA-oriC complex binds and stabilizes one strand of the AT-rich DNA unwinding element (DUE), permitting loading of DNA polymerase. After initiation quickly degrades to an ADP-DnaA complex that is not apt for DNA replication. Binds acidic phospholipids. This Streptococcus equi subsp. equi (strain 4047) protein is Chromosomal replication initiator protein DnaA.